Here is a 200-residue protein sequence, read N- to C-terminus: Phosphatidylethanolamine N-methyltransferase B (200 aa).

The Lumenal segment spans residues 1–8 (MEKGLSSD). Positions 9 to 29 (LIIAFVAIVLHVVNYNVTAQF) form an intramembrane region, helical. The Lumenal segment spans residues 30-39 (EYKTRYFTKL). The chain crosses the membrane as a helical span at residues 40-58 (IGRNAIYYYAVFLIISALI). Residues 59–86 (RDHFINVAVLSDKDSIILFPTEIANMIG) are Cytoplasmic-facing. Residues 87 to 107 (DSCFIFGILLNIWTLKALGIK) form a helical membrane-spanning segment. Residue 91 to 93 (IFG) coordinates S-adenosyl-L-methionine. The Lumenal portion of the chain corresponds to 108-150 (GMYNGDSFGHIMDSPVTGGPYQFFSDPQYVGTTIAALGVAIRN). Residues 151–171 (QSIYGFLCTILVGVVFYISAT) traverse the membrane as a helical segment. Residues 172–200 (FVETPHLKNIYSNRSYSKINFKNLKSLKN) are Cytoplasmic-facing. 174–175 (ET) contacts S-adenosyl-L-methionine.

Belongs to the class VI-like SAM-binding methyltransferase superfamily. PEMT/PEM2 methyltransferase family.

The protein resides in the endoplasmic reticulum membrane. It is found in the mitochondrion membrane. The enzyme catalyses a 1,2-diacyl-sn-glycero-3-phospho-N-methylethanolamine + S-adenosyl-L-methionine = a 1,2-diacyl-sn-glycero-3-phospho-N,N-dimethylethanolamine + S-adenosyl-L-homocysteine + H(+). The catalysed reaction is a 1,2-diacyl-sn-glycero-3-phospho-N,N-dimethylethanolamine + S-adenosyl-L-methionine = a 1,2-diacyl-sn-glycero-3-phosphocholine + S-adenosyl-L-homocysteine + H(+). It catalyses the reaction a 1,2-diacyl-sn-glycero-3-phosphoethanolamine + S-adenosyl-L-methionine = a 1,2-diacyl-sn-glycero-3-phospho-N-methylethanolamine + S-adenosyl-L-homocysteine + H(+). The protein operates within phospholipid metabolism; phosphatidylcholine biosynthesis. Functionally, catalyzes the three sequential steps of the methylation pathway of phosphatidylcholine biosynthesis, the SAM-dependent methylation of phosphatidylethanolamine (PE) to phosphatidylmonomethylethanolamine (PMME), PMME to phosphatidyldimethylethanolamine (PDME), and PDME to phosphatidylcholine (PC). The chain is Phosphatidylethanolamine N-methyltransferase B (pemtB) from Dictyostelium discoideum (Social amoeba).